Here is an 87-residue protein sequence, read N- to C-terminus: Acyl-CoA-binding protein (87 aa).

Residue Ser2 is modified to N-acetylserine. In terms of domain architecture, ACB spans 2-87; it reads SQAEFDKAAE…VEDLKKKYGI (86 aa). Lys8 bears the N6-acetyllysine; alternate mark. Lys8 is modified (N6-succinyllysine; alternate). Residue Lys14 coordinates an acyl-CoA. Residue Lys17 is modified to N6-succinyllysine. Lys19 bears the N6-acetyllysine mark. Tyr29 carries the post-translational modification Phosphotyrosine. Residues 29 to 33, Lys55, and Tyr74 each bind an acyl-CoA; that span reads YSHYK. Residue Lys55 is modified to N6-acetyllysine; alternate. At Lys55 the chain carries N6-succinyllysine; alternate. An N6-(2-hydroxyisobutyryl)lysine; alternate modification is found at Lys55. Lys55 is modified (N6-malonyllysine; alternate). At Lys77 the chain carries N6-acetyllysine; alternate. Lys77 carries the post-translational modification N6-succinyllysine; alternate.

Belongs to the ACBP family. As to quaternary structure, monomer.

It localises to the endoplasmic reticulum. The protein resides in the golgi apparatus. Functionally, binds medium- and long-chain acyl-CoA esters with very high affinity and may function as an intracellular carrier of acyl-CoA esters. This is Acyl-CoA-binding protein (DBI) from Canis lupus familiaris (Dog).